The chain runs to 368 residues: UPF0284 protein Cyan7425_0342 (368 aa).

It belongs to the UPF0284 family.

The chain is UPF0284 protein Cyan7425_0342 from Cyanothece sp. (strain PCC 7425 / ATCC 29141).